The sequence spans 360 residues: MPKKILFTGGGTVGHVTLNLILIPKFIKDGWEVHYIGDKNGIEHTEIEKSGLDVTFHAIATGKLRRYFSWQNLADVFKVALGLLQSLFIVAKLRPQALFSKGGFVSVPPVVAAKLLGKPVFIHESDRSMGLANKIAYKFATTMYTTFEQEDQLSKVKHLGAVTKVFKDTNQMPESTQLEAVKEYFSRDLKTLLFIGGSAGAHVFNQFISDHPELKQRYNIINITGDPHLNELSSHLYRVDYVTDLYQPLMAMADLVVTRGGSNTLFELLAMAKLHLIVPLGKEASRGDQLENATYFEKRGYAKQLQEPDLTLHNFDQAMADLFEHQADYEATMLATKEIQSPDFFYDLLRADISSAIKEK.

Serine 198 and glutamine 289 together coordinate UDP-N-acetyl-alpha-D-glucosamine.

It belongs to the glycosyltransferase 28 family. MurG subfamily.

The protein resides in the cell membrane. The catalysed reaction is Mur2Ac(oyl-L-Ala-gamma-D-Glu-L-Lys-D-Ala-D-Ala)-di-trans,octa-cis-undecaprenyl diphosphate + UDP-N-acetyl-alpha-D-glucosamine = beta-D-GlcNAc-(1-&gt;4)-Mur2Ac(oyl-L-Ala-gamma-D-Glu-L-Lys-D-Ala-D-Ala)-di-trans,octa-cis-undecaprenyl diphosphate + UDP + H(+). It functions in the pathway cell wall biogenesis; peptidoglycan biosynthesis. Cell wall formation. Catalyzes the transfer of a GlcNAc subunit on undecaprenyl-pyrophosphoryl-MurNAc-pentapeptide (lipid intermediate I) to form undecaprenyl-pyrophosphoryl-MurNAc-(pentapeptide)GlcNAc (lipid intermediate II). In Streptococcus pyogenes serotype M4 (strain MGAS10750), this protein is UDP-N-acetylglucosamine--N-acetylmuramyl-(pentapeptide) pyrophosphoryl-undecaprenol N-acetylglucosamine transferase.